Here is a 119-residue protein sequence, read N- to C-terminus: Enhancer of yellow 2 transcription factor (119 aa).

Positions 93 to 119 (LTENETEGTDNHDDDEDDEDENGTEDN) are disordered. A compositionally biased stretch (acidic residues) spans 96–119 (NETEGTDNHDDDEDDEDENGTEDN).

This sequence belongs to the ENY2 family. In terms of assembly, component of the nuclear pore complex (NPC)-associated AMEX complex (anchoring and mRNA export complex), composed of at least e(y)2 and xmas-2. Component of the SAGA transcription coactivator-HAT complexes, at least composed of Ada2b, e(y)2, Pcaf/Gcn5, Taf10 and Nipped-A/Trrap. Within the SAGA complex, e(y)2, Sgf11, and not/nonstop form an additional subcomplex of SAGA called the DUB module (deubiquitination module). Component of the THO complex, composed of at least e(y)2, HPR1, THO2, THOC5, THOC6 and THOC7. Interacts with e(y)1. Interacts with su(Hw) (via zinc fingers). Interacts with xmas-2; required for localization to the nuclear periphery. Interacts with the nuclear pore complex (NPC).

It is found in the nucleus. The protein localises to the nucleoplasm. It localises to the cytoplasm. In terms of biological role, involved in mRNA export coupled transcription activation by association with both the AMEX and the SAGA complexes. The SAGA complex is a multiprotein complex that activates transcription by remodeling chromatin and mediating histone acetylation and deubiquitination. Within the SAGA complex, participates in a subcomplex that specifically deubiquitinates histone H2B. The SAGA complex is recruited to specific gene promoters by activators, where it is required for transcription. Required for nuclear receptor-mediated transactivation. Involved in transcription elongation by recruiting the THO complex onto nascent mRNA. The AMEX complex functions in docking export-competent ribonucleoprotein particles (mRNPs) to the nuclear entrance of the nuclear pore complex (nuclear basket). AMEX participates in mRNA export and accurate chromatin positioning in the nucleus by tethering genes to the nuclear periphery. The sequence is that of Enhancer of yellow 2 transcription factor from Drosophila willistoni (Fruit fly).